The sequence spans 572 residues: Phosphoenolpyruvate-protein phosphotransferase (572 aa).

Catalysis depends on H191, which acts as the Tele-phosphohistidine intermediate. 2 residues coordinate phosphoenolpyruvate: R298 and R334. Mg(2+) contacts are provided by E433 and D457. Phosphoenolpyruvate is bound by residues 456 to 457 and R467; that span reads ND. C504 (proton donor) is an active-site residue.

The protein belongs to the PEP-utilizing enzyme family. In terms of assembly, homodimer. It depends on Mg(2+) as a cofactor.

It localises to the cytoplasm. It catalyses the reaction L-histidyl-[protein] + phosphoenolpyruvate = N(pros)-phospho-L-histidyl-[protein] + pyruvate. General (non sugar-specific) component of the phosphoenolpyruvate-dependent sugar phosphotransferase system (sugar PTS). This major carbohydrate active-transport system catalyzes the phosphorylation of incoming sugar substrates concomitantly with their translocation across the cell membrane. Enzyme I transfers the phosphoryl group from phosphoenolpyruvate (PEP) to the phosphoryl carrier protein (HPr). The chain is Phosphoenolpyruvate-protein phosphotransferase from Staphylococcus aureus (strain MSSA476).